Reading from the N-terminus, the 232-residue chain is Exosome complex component RRP40 (232 aa).

It belongs to the RRP40 family. Component of the RNA exosome complex. Specifically part of the catalytically inactive RNA exosome core complex.

The protein localises to the cytoplasm. Its subcellular location is the nucleus. The protein resides in the nucleolus. Functionally, non-catalytic component of the RNA exosome complex which has 3'-&gt;5' exoribonuclease activity and participates in a multitude of cellular RNA processing and degradation events. In the nucleus, the RNA exosome complex is involved in proper maturation of stable RNA species such as rRNA, snRNA and snoRNA, in the elimination of RNA processing by-products and non-coding 'pervasive' transcripts such as antisense RNA species, and of mRNAs with processing defects, thereby limiting or excluding their export to the cytoplasm. In the cytoplasm, the RNA exosome complex is involved in general mRNA turnover and specifically degrades inherently unstable mRNAs containing AU-rich elements (AREs) within their 3' untranslated regions, and in RNA surveillance pathways, preventing translation of aberrant mRNAs. The catalytic inactive RNA exosome core complex of 9 subunits is proposed to play a pivotal role in the binding and presentation of RNA for ribonucleolysis, and to serve as a scaffold for the association with catalytic subunits and accessory proteins or complexes. Required generally for normal embryonic and neuronal development. Also plays a critical role in the maintenance of neuronal function in mature flies by controlling the levels of specific mRNAs such as the synaptic regulator Arc1. The protein is Exosome complex component RRP40 of Drosophila melanogaster (Fruit fly).